A 231-amino-acid chain; its full sequence is 5'-methylthioadenosine/S-adenosylhomocysteine nucleosidase (231 aa).

Glu-12 acts as the Proton acceptor in catalysis. Substrate-binding positions include Gly-78, Ile-153, and 174–175 (ME). Asp-198 serves as the catalytic Proton donor.

This sequence belongs to the PNP/UDP phosphorylase family. MtnN subfamily.

The catalysed reaction is S-adenosyl-L-homocysteine + H2O = S-(5-deoxy-D-ribos-5-yl)-L-homocysteine + adenine. It catalyses the reaction S-methyl-5'-thioadenosine + H2O = 5-(methylsulfanyl)-D-ribose + adenine. The enzyme catalyses 5'-deoxyadenosine + H2O = 5-deoxy-D-ribose + adenine. Its pathway is amino-acid biosynthesis; L-methionine biosynthesis via salvage pathway; S-methyl-5-thio-alpha-D-ribose 1-phosphate from S-methyl-5'-thioadenosine (hydrolase route): step 1/2. Functionally, catalyzes the irreversible cleavage of the glycosidic bond in both 5'-methylthioadenosine (MTA) and S-adenosylhomocysteine (SAH/AdoHcy) to adenine and the corresponding thioribose, 5'-methylthioribose and S-ribosylhomocysteine, respectively. Also cleaves 5'-deoxyadenosine, a toxic by-product of radical S-adenosylmethionine (SAM) enzymes, into 5-deoxyribose and adenine. The polypeptide is 5'-methylthioadenosine/S-adenosylhomocysteine nucleosidase (Maridesulfovibrio salexigens (strain ATCC 14822 / DSM 2638 / NCIMB 8403 / VKM B-1763) (Desulfovibrio salexigens)).